Consider the following 72-residue polypeptide: Large ribosomal subunit protein uL29 (72 aa).

It belongs to the universal ribosomal protein uL29 family.

The polypeptide is Large ribosomal subunit protein uL29 (Prochlorococcus marinus subsp. pastoris (strain CCMP1986 / NIES-2087 / MED4)).